A 150-amino-acid polypeptide reads, in one-letter code: 3-dehydroquinate dehydratase (150 aa).

The active-site Proton acceptor is the tyrosine 23. Residues asparagine 79, histidine 85, and aspartate 92 each contribute to the substrate site. Histidine 105 functions as the Proton donor in the catalytic mechanism. Substrate is bound by residues isoleucine 106–serine 107 and arginine 116.

This sequence belongs to the type-II 3-dehydroquinase family. As to quaternary structure, homododecamer.

It carries out the reaction 3-dehydroquinate = 3-dehydroshikimate + H2O. It functions in the pathway metabolic intermediate biosynthesis; chorismate biosynthesis; chorismate from D-erythrose 4-phosphate and phosphoenolpyruvate: step 3/7. Its function is as follows. Catalyzes a trans-dehydration via an enolate intermediate. This is 3-dehydroquinate dehydratase from Marinomonas sp. (strain MWYL1).